The chain runs to 827 residues: MRKKRVFEIAKELNMESKEVINRLKAIGVEVKSHMSTVENHHLNLLLKALNREKEEKEKKEQEKKQVEQKAEAQKLQSHPQRPKEQQQSKQGGQSRPREQRSDRPQGQRYAGNQRPEPRDKDKGRRPGEQRSFNQNRPRDDRRRFDKERGVQGPKPFGEKKERPPFPREKKKGVLPAIPKPEAPKGENKEPERRKGAPDKKREWEKALKKEEKVFALEEKKLNLKKEKKQEKQEKQEPVAAEPKAIVIPERMTVQEFAKIMGKSAAEVIKKLMSYGILATINQEIDADTATIIATDFGYEVTVEKEEKEDIWLLEETPDDPESLEPRPPIVTVMGHVDHGKTSLLDAIRQTNVTATEAGGITQHIGAYQVEHNGRKITFIDTPGHEAFTAMRARGAQVTDIAILVVAADDGVMPQTVEAINHAKAAGVPIIVAVNKIDKPNAQPDRVKQQLTEYGLIPEAWGGDTVFVEVSALKKIGIEELLEMILLVADLKELKANPNKPARGTVIEAKLDKGRGPVATVLVQSGTLNVGDVVVVGLTYGRVRALMDDKGRRVKKATPSMPVEVLGLNDVPSAGDILVVVDDEKTARTLAEKRQEQKREEELRASSKVSLEDLFKHIQEGKIKELNIVLKADVHGSVEAIKQSLSRLSTEEVKVNVIHSGVGAITETDIMLASASNAIVIGFNVRPDSNARKLAETEKIDVRVYRIIYELLDDIKAAMAGLLEPEQKEVVLGRAEVRKTFKASKVGTIAGLYVLEGKITRSAKVRVIRDGIVIHEGNVESLKRFKDDVREVAQGYECGLTIEKFNDIREGDIIEAFTIEEVKRTLE.

Residues 49 to 205 (ALNREKEEKE…GAPDKKREWE (157 aa)) are disordered. Composition is skewed to basic and acidic residues over residues 50–73 (LNRE…KAEA), 96–106 (RPREQRSDRPQ), 116–129 (PEPR…RPGE), 137–150 (RPRD…KERG), 157–168 (FGEKKERPPFPR), and 182–205 (EAPK…REWE). The tr-type G domain occupies 326–495 (PRPPIVTVMG…LLVADLKELK (170 aa)). The tract at residues 335–342 (GHVDHGKT) is G1. Position 335–342 (335–342 (GHVDHGKT)) interacts with GTP. The segment at 360–364 (GITQH) is G2. Positions 381–384 (DTPG) are G3. Residues 381-385 (DTPGH) and 435-438 (NKID) each bind GTP. A G4 region spans residues 435-438 (NKID). Residues 471 to 473 (SAL) form a G5 region.

The protein belongs to the TRAFAC class translation factor GTPase superfamily. Classic translation factor GTPase family. IF-2 subfamily.

It localises to the cytoplasm. Functionally, one of the essential components for the initiation of protein synthesis. Protects formylmethionyl-tRNA from spontaneous hydrolysis and promotes its binding to the 30S ribosomal subunits. Also involved in the hydrolysis of GTP during the formation of the 70S ribosomal complex. This chain is Translation initiation factor IF-2, found in Carboxydothermus hydrogenoformans (strain ATCC BAA-161 / DSM 6008 / Z-2901).